The sequence spans 287 residues: Large ribosomal subunit protein uL2 (287 aa).

Residues 221-287 (RGSVMNPCDH…SKRSRGGRDS (67 aa)) form a disordered region. The segment covering 258 to 287 (KTRKKNKPSNKLVVRRRRRISKRSRGGRDS) has biased composition (basic residues).

Belongs to the universal ribosomal protein uL2 family. Part of the 50S ribosomal subunit. Forms a bridge to the 30S subunit in the 70S ribosome.

In terms of biological role, one of the primary rRNA binding proteins. Required for association of the 30S and 50S subunits to form the 70S ribosome, for tRNA binding and peptide bond formation. It has been suggested to have peptidyltransferase activity; this is somewhat controversial. Makes several contacts with the 16S rRNA in the 70S ribosome. This Prochlorococcus marinus subsp. pastoris (strain CCMP1986 / NIES-2087 / MED4) protein is Large ribosomal subunit protein uL2.